The following is a 551-amino-acid chain: C6 finger transcription factor imqK (551 aa).

The zn(2)-C6 fungal-type DNA-binding region spans 11-53 (CDRCRGQKLRCVRLPGPAREDSPRSARSVNQPCERCKRAKVVC). Disordered regions lie at residues 280-302 (RQGMSAASDPNYPASGLGETSPS) and 351-378 (NEYSSSRSQSRNHSTSASSRSKDGRISA). The segment covering 351–369 (NEYSSSRSQSRNHSTSASS) has biased composition (low complexity).

The protein resides in the nucleus. Its function is as follows. C6 finger transcription factor that positively regulates the cluster that mediates the biosynthesis of imizoquins A to D, tripeptide-derived alkaloids that serve a protective role against oxidative stress that are essential for normal germination. This is C6 finger transcription factor imqK from Aspergillus flavus (strain ATCC 200026 / FGSC A1120 / IAM 13836 / NRRL 3357 / JCM 12722 / SRRC 167).